A 361-amino-acid polypeptide reads, in one-letter code: Beta-hexosaminidase (361 aa).

Substrate-binding positions include aspartate 69, arginine 77, arginine 144, and 174 to 175 (KH). Catalysis depends on histidine 187, which acts as the Proton donor/acceptor. Aspartate 258 functions as the Nucleophile in the catalytic mechanism.

It belongs to the glycosyl hydrolase 3 family. NagZ subfamily.

It is found in the cytoplasm. It catalyses the reaction Hydrolysis of terminal non-reducing N-acetyl-D-hexosamine residues in N-acetyl-beta-D-hexosaminides.. It participates in cell wall biogenesis; peptidoglycan recycling. Plays a role in peptidoglycan recycling by cleaving the terminal beta-1,4-linked N-acetylglucosamine (GlcNAc) from peptide-linked peptidoglycan fragments, giving rise to free GlcNAc, anhydro-N-acetylmuramic acid and anhydro-N-acetylmuramic acid-linked peptides. The polypeptide is Beta-hexosaminidase (Neisseria meningitidis serogroup B (strain ATCC BAA-335 / MC58)).